The chain runs to 151 residues: Large ribosomal subunit protein bL9 (151 aa).

This sequence belongs to the bacterial ribosomal protein bL9 family.

Its function is as follows. Binds to the 23S rRNA. The polypeptide is Large ribosomal subunit protein bL9 (Prochlorococcus marinus (strain MIT 9515)).